A 293-amino-acid polypeptide reads, in one-letter code: Ribosomal protein L11 methyltransferase (293 aa).

S-adenosyl-L-methionine is bound by residues T145, G166, D188, and N230.

Belongs to the methyltransferase superfamily. PrmA family.

It is found in the cytoplasm. The enzyme catalyses L-lysyl-[protein] + 3 S-adenosyl-L-methionine = N(6),N(6),N(6)-trimethyl-L-lysyl-[protein] + 3 S-adenosyl-L-homocysteine + 3 H(+). In terms of biological role, methylates ribosomal protein L11. This is Ribosomal protein L11 methyltransferase from Serratia proteamaculans (strain 568).